A 130-amino-acid polypeptide reads, in one-letter code: Small ribosomal subunit protein uS8 (130 aa).

It belongs to the universal ribosomal protein uS8 family. Part of the 30S ribosomal subunit. Contacts proteins S5 and S12.

One of the primary rRNA binding proteins, it binds directly to 16S rRNA central domain where it helps coordinate assembly of the platform of the 30S subunit. This chain is Small ribosomal subunit protein uS8, found in Klebsiella pneumoniae subsp. pneumoniae (strain ATCC 700721 / MGH 78578).